Reading from the N-terminus, the 225-residue chain is 7-carboxy-7-deazaguanine synthase (225 aa).

Substrate-binding positions include 12 to 14 and Arg-27; that span reads IQG. Residues 18–225 enclose the Radical SAM core domain; that stretch reads YIGVRQLFVR…PQVHKYLGVR (208 aa). [4Fe-4S] cluster-binding residues include Cys-31, Cys-35, and Cys-38. Mg(2+) is bound at residue Thr-40. Thr-80 contributes to the substrate binding site. Gly-82 contacts S-adenosyl-L-methionine.

Belongs to the radical SAM superfamily. 7-carboxy-7-deazaguanine synthase family. Homodimer. The cofactor is [4Fe-4S] cluster. It depends on S-adenosyl-L-methionine as a cofactor. Mg(2+) is required as a cofactor.

It carries out the reaction 6-carboxy-5,6,7,8-tetrahydropterin + H(+) = 7-carboxy-7-deazaguanine + NH4(+). Its pathway is purine metabolism; 7-cyano-7-deazaguanine biosynthesis. In terms of biological role, catalyzes the complex heterocyclic radical-mediated conversion of 6-carboxy-5,6,7,8-tetrahydropterin (CPH4) to 7-carboxy-7-deazaguanine (CDG), a step common to the biosynthetic pathways of all 7-deazapurine-containing compounds. The protein is 7-carboxy-7-deazaguanine synthase of Archaeoglobus fulgidus (strain ATCC 49558 / DSM 4304 / JCM 9628 / NBRC 100126 / VC-16).